Consider the following 490-residue polypeptide: Betaine aldehyde dehydrogenase (490 aa).

D93 is a binding site for K(+). 150 to 152 contacts NAD(+); sequence GAW. The active-site Charge relay system is K162. 176-179 serves as a coordination point for NAD(+); sequence KPSE. Residue V180 participates in K(+) binding. 230–233 lines the NAD(+) pocket; it reads GIAS. L246 serves as a coordination point for K(+). E252 (proton acceptor) is an active-site residue. Positions 254, 286, and 387 each coordinate NAD(+). C286 (nucleophile) is an active-site residue. C286 carries the cysteine sulfenic acid (-SOH) modification. K(+)-binding residues include K457 and G460. The Charge relay system role is filled by E464.

It belongs to the aldehyde dehydrogenase family. Dimer of dimers. K(+) serves as cofactor.

It carries out the reaction betaine aldehyde + NAD(+) + H2O = glycine betaine + NADH + 2 H(+). It functions in the pathway amine and polyamine biosynthesis; betaine biosynthesis via choline pathway; betaine from betaine aldehyde: step 1/1. In terms of biological role, involved in the biosynthesis of the osmoprotectant glycine betaine. Catalyzes the irreversible oxidation of betaine aldehyde to the corresponding acid. The polypeptide is Betaine aldehyde dehydrogenase (Yersinia pestis).